The following is a 299-amino-acid chain: ATP phosphoribosyltransferase (299 aa).

Belongs to the ATP phosphoribosyltransferase family. Long subfamily. The cofactor is Mg(2+).

It is found in the cytoplasm. The enzyme catalyses 1-(5-phospho-beta-D-ribosyl)-ATP + diphosphate = 5-phospho-alpha-D-ribose 1-diphosphate + ATP. It participates in amino-acid biosynthesis; L-histidine biosynthesis; L-histidine from 5-phospho-alpha-D-ribose 1-diphosphate: step 1/9. Its activity is regulated as follows. Feedback inhibited by histidine. In terms of biological role, catalyzes the condensation of ATP and 5-phosphoribose 1-diphosphate to form N'-(5'-phosphoribosyl)-ATP (PR-ATP). Has a crucial role in the pathway because the rate of histidine biosynthesis seems to be controlled primarily by regulation of HisG enzymatic activity. In Campylobacter jejuni subsp. jejuni serotype O:23/36 (strain 81-176), this protein is ATP phosphoribosyltransferase.